Reading from the N-terminus, the 92-residue chain is Transcription factor S4 (92 aa).

The segment at 1-31 (MRFCPKCGSFLKVKGNKMVCSKCGYSDHDVE) is ZR-N. Residues C4, C7, C20, and C23 each contribute to the Zn(2+) site. A flexible linker region spans residues 32–56 (KVILKENVAHENDKTIIADGETIEG). The segment at 55–92 (EGRVAISLCPRCGSVRAILLNKKKRLYRCMTCNFVYNI) is ZR-C. The Zn(2+) site is built by C63 and C66. Catalysis depends on residues K76, K77, and K78. Zn(2+) is bound by residues C83 and C86.

Belongs to the archaeal RpoM/eukaryotic RPA12/RPB9/RPC11 RNA polymerase family. As to quaternary structure, interacts with RNA polymerase. It depends on Zn(2+) as a cofactor.

Its function is as follows. A potent inhibitor of RNA polymerase (RNAP) probably involved in viral defense. Destabilizes the transcription pre-initiation complex of TBP, TFB, DNA and RNAP, inhibits abortive transcription initiation, productive initiation and transcription elongation. Increases the RNAP KM for NTPs about 50-fold. Overexpression of TFS1-tip4 (TFS1 with the active tip of this protein, phenocopies this protein) in S.acidocaldarius MW001 leads to severe growth inhibition. When bound to RNAP induces conformational changes that widen the DNA-binding channel, probably destabilizing the interaction of DNA with RNAP. This is Transcription factor S4 from Saccharolobus solfataricus (strain ATCC 35092 / DSM 1617 / JCM 11322 / P2) (Sulfolobus solfataricus).